The sequence spans 347 residues: NADH-ubiquinone oxidoreductase chain 2 (347 aa).

9 helical membrane passes run 3–23, 59–79, 93–115, 150–170, 178–198, 200–220, 240–260, 274–294, and 326–346; these read PLAL…TMMS, YFMT…INLM, VASN…HFWV, NTNL…WGGL, ILAY…PFNP, LTLL…MILA, MTIM…LSGF, NSII…YFYT, and LPTL…ISML.

Belongs to the complex I subunit 2 family. As to quaternary structure, core subunit of respiratory chain NADH dehydrogenase (Complex I) which is composed of 45 different subunits. Interacts with TMEM242.

It is found in the mitochondrion inner membrane. The catalysed reaction is a ubiquinone + NADH + 5 H(+)(in) = a ubiquinol + NAD(+) + 4 H(+)(out). In terms of biological role, core subunit of the mitochondrial membrane respiratory chain NADH dehydrogenase (Complex I) which catalyzes electron transfer from NADH through the respiratory chain, using ubiquinone as an electron acceptor. Essential for the catalytic activity and assembly of complex I. The chain is NADH-ubiquinone oxidoreductase chain 2 from Elephas maximus (Indian elephant).